A 392-amino-acid polypeptide reads, in one-letter code: Formate-dependent phosphoribosylglycinamide formyltransferase (392 aa).

N(1)-(5-phospho-beta-D-ribosyl)glycinamide-binding positions include 22–23 (EL) and Glu-82. ATP is bound by residues Arg-114, Lys-155, 160-165 (SSGKGQ), 195-198 (EGVV), and Glu-203. Residues 119-308 (RLAAEELGLP…EFALHVRAFL (190 aa)) form the ATP-grasp domain. Glu-267 and Glu-279 together coordinate Mg(2+). Residues Asp-286, Lys-355, and 362–363 (RR) contribute to the N(1)-(5-phospho-beta-D-ribosyl)glycinamide site.

It belongs to the PurK/PurT family. In terms of assembly, homodimer.

It carries out the reaction N(1)-(5-phospho-beta-D-ribosyl)glycinamide + formate + ATP = N(2)-formyl-N(1)-(5-phospho-beta-D-ribosyl)glycinamide + ADP + phosphate + H(+). It participates in purine metabolism; IMP biosynthesis via de novo pathway; N(2)-formyl-N(1)-(5-phospho-D-ribosyl)glycinamide from N(1)-(5-phospho-D-ribosyl)glycinamide (formate route): step 1/1. Functionally, involved in the de novo purine biosynthesis. Catalyzes the transfer of formate to 5-phospho-ribosyl-glycinamide (GAR), producing 5-phospho-ribosyl-N-formylglycinamide (FGAR). Formate is provided by PurU via hydrolysis of 10-formyl-tetrahydrofolate. The polypeptide is Formate-dependent phosphoribosylglycinamide formyltransferase (Salmonella choleraesuis (strain SC-B67)).